We begin with the raw amino-acid sequence, 304 residues long: Cell surface-binding protein OPG105 (304 aa).

Residues 1-235 (MSQQLSPINI…NDDTEVYYSG (235 aa)) form the Alpha-carbonic anhydrase domain. Topologically, residues 1–275 (MSQQLSPINI…YQKYIEGNKT (275 aa)) are virion surface. Residues 276–294 (FAIIAIVFVYILTAILFLM) traverse the membrane as a helical segment. At 295-304 (SRRYSREKQN) the chain is on the intravirion side.

This sequence belongs to the alpha-carbonic anhydrase family. In terms of assembly, homodimer; disulfide-linked. In terms of processing, apparently non-glycosylated.

Its subcellular location is the virion membrane. Functionally, binds to chondroitin sulfate on the cell surface to provide virion attachment to target cell. In Homo sapiens (Human), this protein is Cell surface-binding protein OPG105 (OPG105).